A 398-amino-acid chain; its full sequence is Lysophospholipid transporter LplT (398 aa).

11 consecutive transmembrane segments (helical) span residues 17–37 (AVLVSQFFSAFADNALLFAIL), 52–72 (ILQIVFVLAYILLAPFVGQIA), 90–110 (LGAFTICLGYDPFLGYALVGV), 137–157 (GLMEASTIIAILTGSVVGGFL), 163–183 (AIALLVCALMYGIAVVANFFI), 226–246 (LFWGAGITLRFLLVLWVPVVL), 256–276 (ILNVMVAVGIIIGAGAAARFI), 285–305 (MPAGVLIGVMVVIFAVQHSIW), 309–329 (VLLIILGIFGGLFIVPLNALL), 352–372 (IAMLLMLGLYSLVIKIGVPVV), and 373–393 (TTGIGFGTLLALTITSLWIWN).

It belongs to the major facilitator superfamily. LplT (TC 2.A.1.42) family.

The protein resides in the cell inner membrane. Functionally, catalyzes the facilitated diffusion of 2-acyl-glycero-3-phosphoethanolamine (2-acyl-GPE) into the cell. This chain is Lysophospholipid transporter LplT, found in Photorhabdus laumondii subsp. laumondii (strain DSM 15139 / CIP 105565 / TT01) (Photorhabdus luminescens subsp. laumondii).